Consider the following 298-residue polypeptide: Junctional adhesion molecule A (298 aa).

The signal sequence occupies residues 1 to 28 (MGTEARAGRRQLLVFTSVVLSSLALGRG). 2 Ig-like V-type domains span residues 29-126 (AVYT…VQLT) and 134-227 (PTVH…EAVR). The Extracellular segment spans residues 29–237 (AVYTSEPDVR…MEAAELNVGG (209 aa)). 2 cysteine pairs are disulfide-bonded: cysteine 49–cysteine 108 and cysteine 152–cysteine 211. Residue asparagine 184 is glycosylated (N-linked (GlcNAc...) asparagine). Residues 238 to 258 (IVAAVLVTLILLGFLILGIWF) traverse the membrane as a helical segment. Topologically, residues 259 to 298 (AYRRGYFDRTKKGTSSKKVIYSQPAARSEGEFRQTSSFLV) are cytoplasmic. Residues serine 280 and serine 286 each carry the phosphoserine modification.

It belongs to the immunoglobulin superfamily. Interacts with the ninth PDZ domain of MPDZ. Interacts with the first PDZ domain of PARD3. The association between PARD3 and PARD6B probably disrupts this interaction. Interacts with ITGAL (via I-domain). Interacts with CD151. In terms of assembly, (Microbial infection) Interacts with calicivirus capsid protein. As to quaternary structure, (Microbial infection) Interacts with the orthoreovirus sigma-1 capsid protein.

Its subcellular location is the cell junction. It is found in the tight junction. The protein resides in the cell membrane. In terms of biological role, seems to play a role in epithelial tight junction formation. Appears early in primordial forms of cell junctions and recruits PARD3. The association of the PARD6-PARD3 complex may prevent the interaction of PARD3 with JAM1, thereby preventing tight junction assembly. Plays a role in regulating monocyte transmigration involved in integrity of epithelial barrier. Ligand for integrin alpha-L/beta-2 involved in memory T-cell and neutrophil transmigration. Involved in platelet activation. Its function is as follows. (Microbial infection) Acts as a functional receptor for murine norovirus. Functionally, (Microbial infection) In case of orthoreovirus infection, serves as receptor for the virus. This is Junctional adhesion molecule A (F11R) from Felis catus (Cat).